We begin with the raw amino-acid sequence, 206 residues long: High frequency lysogenization protein HflD homolog (206 aa).

This sequence belongs to the HflD family.

The protein resides in the cytoplasm. Its subcellular location is the cell inner membrane. The polypeptide is High frequency lysogenization protein HflD homolog (Pseudomonas syringae pv. tomato (strain ATCC BAA-871 / DC3000)).